The sequence spans 86 residues: MSKGHSLQDPYLNTLRKEKVPVSIYLVNGIKLQGSIESFDQFVVLLKNTVSQMVYKHAISTVVPARPVRLPSPSDSEHGDSEPGNA.

Residues 9–68 (DPYLNTLRKEKVPVSIYLVNGIKLQGSIESFDQFVVLLKNTVSQMVYKHAISTVVPARPV) enclose the Sm domain. Residues 66 to 86 (RPVRLPSPSDSEHGDSEPGNA) are disordered. Positions 75-86 (DSEHGDSEPGNA) are enriched in basic and acidic residues.

Belongs to the Hfq family. As to quaternary structure, homohexamer.

RNA chaperone that binds small regulatory RNA (sRNAs) and mRNAs to facilitate mRNA translational regulation in response to envelope stress, environmental stress and changes in metabolite concentrations. Also binds with high specificity to tRNAs. The polypeptide is RNA-binding protein Hfq (Pseudomonas putida (strain W619)).